The sequence spans 261 residues: Class II histocompatibility antigen, M beta 1 chain (261 aa).

Residues 1–18 (MAALWLLLLVLSLHCMGA) form the signal peptide. The tract at residues 19–112 (GGFVAHVEST…PFWNALTHRT (94 aa)) is beta-1. At 19–218 (GGFVAHVEST…PGLSPIQTVK (200 aa)) the chain is on the lumenal side. 3 disulfide bridges follow: Cys-29/Cys-97, Cys-43/Cys-53, and Cys-135/Cys-192. Asn-75 carries N-linked (GlcNAc...) asparagine glycosylation. The segment at 113 to 207 (RPPSVRVAQT…GTSEPIRGDW (95 aa)) is beta-2. In terms of domain architecture, Ig-like C1-type spans 114–204 (PPSVRVAQTT…QHSGTSEPIR (91 aa)). A connecting peptide region spans residues 208-218 (TPGLSPIQTVK). A helical transmembrane segment spans residues 219–239 (VSVSAATLGLGFIIFCVGFFR). Residues 240-261 (WRKSHSSSYTPLSGSTYPEGRH) are Cytoplasmic-facing. Positions 248–251 (YTPL) match the YXXZ motif motif.

This sequence belongs to the MHC class II family. In terms of assembly, heterodimer of an alpha chain (DMA) and a beta chain (DMB). Interacts with MHCII; this interaction mediates rapid selection of high-affinity peptides.

Its subcellular location is the late endosome membrane. The protein localises to the lysosome membrane. In terms of biological role, plays a critical role in catalyzing the release of class II-associated invariant chain peptide (CLIP) from newly synthesized MHC class II molecules and freeing the peptide binding site for acquisition of antigenic peptides. In Mus musculus (Mouse), this protein is Class II histocompatibility antigen, M beta 1 chain (H2-DMb1).